The chain runs to 385 residues: Chaperone protein DnaJ (385 aa).

A J domain is found at 3 to 68 (DYYEILGVTR…QKRAAYDRFG (66 aa)). The CR-type zinc finger occupies 135–213 (GAEVEITVPA…CHGHGQVRRE (79 aa)). Zn(2+) is bound by residues cysteine 148, cysteine 151, cysteine 165, cysteine 168, cysteine 187, cysteine 190, cysteine 201, and cysteine 204. CXXCXGXG motif repeat units lie at residues 148–155 (CEVCEGSG), 165–172 (CGTCGGAG), 187–194 (CPRCGGSG), and 201–208 (CSNCHGHG).

Belongs to the DnaJ family. Homodimer. Zn(2+) serves as cofactor.

It is found in the cytoplasm. In terms of biological role, participates actively in the response to hyperosmotic and heat shock by preventing the aggregation of stress-denatured proteins and by disaggregating proteins, also in an autonomous, DnaK-independent fashion. Unfolded proteins bind initially to DnaJ; upon interaction with the DnaJ-bound protein, DnaK hydrolyzes its bound ATP, resulting in the formation of a stable complex. GrpE releases ADP from DnaK; ATP binding to DnaK triggers the release of the substrate protein, thus completing the reaction cycle. Several rounds of ATP-dependent interactions between DnaJ, DnaK and GrpE are required for fully efficient folding. Also involved, together with DnaK and GrpE, in the DNA replication of plasmids through activation of initiation proteins. The chain is Chaperone protein DnaJ from Caulobacter vibrioides (strain ATCC 19089 / CIP 103742 / CB 15) (Caulobacter crescentus).